Here is a 443-residue protein sequence, read N- to C-terminus: Probable glycine dehydrogenase (decarboxylating) subunit 1 (443 aa).

It belongs to the GcvP family. N-terminal subunit subfamily. The glycine cleavage system is composed of four proteins: P, T, L and H. In this organism, the P 'protein' is a heterodimer of two subunits.

The enzyme catalyses N(6)-[(R)-lipoyl]-L-lysyl-[glycine-cleavage complex H protein] + glycine + H(+) = N(6)-[(R)-S(8)-aminomethyldihydrolipoyl]-L-lysyl-[glycine-cleavage complex H protein] + CO2. Functionally, the glycine cleavage system catalyzes the degradation of glycine. The P protein binds the alpha-amino group of glycine through its pyridoxal phosphate cofactor; CO(2) is released and the remaining methylamine moiety is then transferred to the lipoamide cofactor of the H protein. This is Probable glycine dehydrogenase (decarboxylating) subunit 1 from Chloroherpeton thalassium (strain ATCC 35110 / GB-78).